The primary structure comprises 296 residues: Cholesterol ring-cleaving hydrolase IpdA subunit (296 aa).

Belongs to the 3-oxoacid CoA-transferase subunit A family. Heterotetramer composed of 2 IpdA subunits and 2 IpdB subunits.

It catalyses the reaction (3E)-2-(2-carboxylatoethyl)-3-methyl-6-oxocyclohex-1-ene-1-carboxyl-CoA + H2O = 6-methyl-3,7-dioxodecanedioyl-CoA. Its pathway is steroid metabolism; cholesterol degradation. Its function is as follows. Involved in the final steps of cholesterol and steroid degradation. Opens the last steroid ring of cholesterol by catalyzing the hydrolysis of (3E)-2-(2-carboxylatoethyl)-3-methyl-6-oxocyclohex-1-ene-1-carboxyl-CoA (COCHEA-CoA) to 6-methyl-3,7-dioxodecanedioyl-CoA (MeDODA-CoA). This is Cholesterol ring-cleaving hydrolase IpdA subunit from Rhodococcus jostii (strain RHA1).